The following is a 197-amino-acid chain: Protein Hikeshi (197 aa).

Residues 18–55 are required for F-X-F-G repeats-nucleoporins recognition and nuclear import; the sequence is VAEDKFVFDLPDYENINHVVVFMLGTIPFPEGMGGSVY. A flexible linker region involved in nuclear import of HSP70 proteins region spans residues 124–134; that stretch reads QTPVGSAAVSS.

It belongs to the OPI10 family. In terms of assembly, forms an asymmetric homodimer; required for binding and nuclear import of HSP70 proteins. Interacts with ATP-bound HSP70 proteins. Interacts with NUP62 and NUP153 (via F-X-F-G repeats). Interacts with HSPA8. In terms of tissue distribution, expressed in the central white matter of newborn and adult brain, particularly in regions where oligodendrocytes are generated.

It localises to the cytoplasm. Its subcellular location is the cytosol. The protein localises to the nucleus. Functionally, acts as a specific nuclear import carrier for HSP70 proteins following heat-shock stress: acts by mediating the nucleoporin-dependent translocation of ATP-bound HSP70 proteins into the nucleus. HSP70 proteins import is required to protect cells from heat shock damages. Does not translocate ADP-bound HSP70 proteins into the nucleus. May also be indirectly required for organization and/or function of the secretory apparatus in Club cells in lung. The sequence is that of Protein Hikeshi from Mus musculus (Mouse).